The following is a 153-amino-acid chain: MGGFGSRFWQEGVWDRDLEKSTRLEEDAMESEPLAGTKTRGRGRRRWEARHGWTLPAHASQPSPRTVVATATGAEVSACAGRSAGTRVARPESQLSHLYGWDKYSNPRPSRRARAVARVHALEQAPILCRALRWGLTQFLRGTSPVTQSVPFS.

The tract at residues 19–46 is disordered; sequence EKSTRLEEDAMESEPLAGTKTRGRGRRR.

This is an uncharacterized protein from Homo sapiens (Human).